Consider the following 124-residue polypeptide: Small ribosomal subunit protein bS6 (124 aa).

Positions 96 to 124 are disordered; that stretch reads ETGPSPMMKEVQREEAKKSAATQPSEAQA. Over residues 115–124 the composition is skewed to polar residues; sequence AATQPSEAQA.

Belongs to the bacterial ribosomal protein bS6 family.

In terms of biological role, binds together with bS18 to 16S ribosomal RNA. This Paraburkholderia phytofirmans (strain DSM 17436 / LMG 22146 / PsJN) (Burkholderia phytofirmans) protein is Small ribosomal subunit protein bS6.